The chain runs to 359 residues: Dual-specificity RNA methyltransferase RlmN 1 (359 aa).

The active-site Proton acceptor is Glu96. In terms of domain architecture, Radical SAM core spans 102–335; sequence FKGRATVCIS…STVRQRRGID (234 aa). A disulfide bridge connects residues Cys109 and Cys340. 3 residues coordinate [4Fe-4S] cluster: Cys116, Cys120, and Cys123. Residues 166–167, Ser198, 221–223, and Asn297 each bind S-adenosyl-L-methionine; these read GE and SLH. Cys340 functions as the S-methylcysteine intermediate in the catalytic mechanism.

This sequence belongs to the radical SAM superfamily. RlmN family. [4Fe-4S] cluster is required as a cofactor.

The protein resides in the cytoplasm. The catalysed reaction is adenosine(2503) in 23S rRNA + 2 reduced [2Fe-2S]-[ferredoxin] + 2 S-adenosyl-L-methionine = 2-methyladenosine(2503) in 23S rRNA + 5'-deoxyadenosine + L-methionine + 2 oxidized [2Fe-2S]-[ferredoxin] + S-adenosyl-L-homocysteine. It carries out the reaction adenosine(37) in tRNA + 2 reduced [2Fe-2S]-[ferredoxin] + 2 S-adenosyl-L-methionine = 2-methyladenosine(37) in tRNA + 5'-deoxyadenosine + L-methionine + 2 oxidized [2Fe-2S]-[ferredoxin] + S-adenosyl-L-homocysteine. Its function is as follows. Specifically methylates position 2 of adenine 2503 in 23S rRNA and position 2 of adenine 37 in tRNAs. m2A2503 modification seems to play a crucial role in the proofreading step occurring at the peptidyl transferase center and thus would serve to optimize ribosomal fidelity. This chain is Dual-specificity RNA methyltransferase RlmN 1, found in Myxococcus xanthus (strain DK1622).